The sequence spans 920 residues: Periplasmic nitrate reductase (920 aa).

The segment at residues methionine 1 to alanine 29 is a signal peptide (tat-type signal). A 4Fe-4S Mo/W bis-MGD-type domain is found at tryptophan 35 to aspartate 91. [4Fe-4S] cluster is bound by residues cysteine 42, cysteine 45, cysteine 49, and cysteine 77. Mo-bis(molybdopterin guanine dinucleotide) contacts are provided by residues lysine 79, glutamine 147, asparagine 172, cysteine 176, tryptophan 209–methionine 216, methionine 416, glutamine 420, asparagine 526, serine 551–aspartate 552, lysine 574, aspartate 601, and threonine 810–serine 819. Tryptophan 886 provides a ligand contact to substrate. Positions 894 and 911 each coordinate Mo-bis(molybdopterin guanine dinucleotide).

It belongs to the prokaryotic molybdopterin-containing oxidoreductase family. NasA/NapA/NarB subfamily. As to quaternary structure, component of the periplasmic nitrate reductase NapAB complex composed of NapA and NapB. [4Fe-4S] cluster is required as a cofactor. Mo-bis(molybdopterin guanine dinucleotide) serves as cofactor. In terms of processing, predicted to be exported by the Tat system. The position of the signal peptide cleavage has not been experimentally proven.

The protein resides in the periplasm. The catalysed reaction is 2 Fe(II)-[cytochrome] + nitrate + 2 H(+) = 2 Fe(III)-[cytochrome] + nitrite + H2O. Functionally, catalytic subunit of the periplasmic nitrate reductase complex NapAB. Receives electrons from NapB and catalyzes the reduction of nitrate to nitrite. This is Periplasmic nitrate reductase from Campylobacter hominis (strain ATCC BAA-381 / DSM 21671 / CCUG 45161 / LMG 19568 / NCTC 13146 / CH001A).